Here is a 1296-residue protein sequence, read N- to C-terminus: Histone-lysine N-methyltransferase EHMT1 (1296 aa).

2 disordered regions span residues 1–111 (MAAA…NHVT) and 170–200 (PQTP…TDVR). A2 carries the post-translational modification N-acetylalanine. Over residues 14–31 (QETKQDCCMKTELLREDT) the composition is skewed to basic and acidic residues. K23 is covalently cross-linked (Glycyl lysine isopeptide (Lys-Gly) (interchain with G-Cter in SUMO1); alternate). Residue K23 forms a Glycyl lysine isopeptide (Lys-Gly) (interchain with G-Cter in SUMO2); alternate linkage. The span at 77 to 89 (NTRASPQEGTNRV) shows a compositional bias: polar residues. A compositionally biased stretch (basic and acidic residues) spans 97 to 106 (VSERDTEVGK). Residues K191, K229, K232, K315, and K325 each participate in a glycyl lysine isopeptide (Lys-Gly) (interchain with G-Cter in SUMO2) cross-link. Residues 341–470 (SLEMDSEDED…SSPGSMEQAA (130 aa)) form a disordered region. Residues 342–360 (LEMDSEDEDSDELEDDEDH) are compositionally biased toward acidic residues. Over residues 371–391 (EDSRTSKESMSETDRAAKMDG) the composition is skewed to basic and acidic residues. Positions 392–414 (DSEEEQESPDTGEDEDGGDESDL) are enriched in acidic residues. K430 is covalently cross-linked (Glycyl lysine isopeptide (Lys-Gly) (interchain with G-Cter in SUMO2)). Position 433 is a phosphoserine (S433). Residues 438 to 450 (PARKRRRRSRKKP) are compositionally biased toward basic residues. Phosphoserine is present on S481. Glycyl lysine isopeptide (Lys-Gly) (interchain with G-Cter in SUMO2) cross-links involve residues K559, K644, K659, and K729. A disordered region spans residues 653–714 (LAPGQEKSLA…PTSGLSQGPG (62 aa)). ANK repeat units follow at residues 735-764 (FHPK…DPNF), 770-799 (SKRS…NIDT), 803-832 (DQRT…QVDP), 836-866 (EGST…DVNC), 870-899 (GGWT…DINI), 903-932 (EENI…DLHA), 936-965 (HGDS…DVTL), and 969-1002 (EGET…DKPV). A histone H3K9me binding region spans residues 903–905 (EEN). S1046 is subject to Phosphoserine. In terms of domain architecture, Pre-SET spans 1058–1121 (QYCVCVDDCS…NCRNRVVQNG (64 aa)). Zn(2+) contacts are provided by C1060, C1062, C1066, C1071, C1073, C1103, C1107, C1109, and C1113. The SET domain occupies 1124 to 1241 (ARLQLYRTQD…AGEQLGFDYG (118 aa)). S-adenosyl-L-methionine is bound by residues 1134 to 1136 (MGW), Y1171, and 1198 to 1199 (NH). Positions 1160–1179 (DSEADVREEDSYLFDLDNKD) are interaction with histone H3. A Zn(2+)-binding site is contributed by C1201. Residues 1240–1243 (YGER) form an interaction with histone H3 region. C1254 is a Zn(2+) binding site. Residue R1255 coordinates S-adenosyl-L-methionine. Zn(2+) is bound by residues C1256 and C1261. The tract at residues 1271–1296 (RQASAAQEPQENGLPDTSSAAAADPL) is disordered.

This sequence belongs to the class V-like SAM-binding methyltransferase superfamily. Interacts with WIZ. Part of the E2F6.com-1 complex in G0 phase composed of E2F6, MGA, MAX, TFDP1, CBX3, BAT8, EHMT1, RING1, RNF2, MBLR, L3MBTL2 and YAF2. Interacts with MPHOSPH8. Interacts with CDYL. Interacts with REST only in the presence of CDYL. Part of a complex containing at least CDYL, REST, WIZ, SETB1, EHMT1 and EHMT2. Heterodimer; heterodimerizes with EHMT2. Interacts (via ANK repeats) with RELA (when monomethylated at 'Lys-310'). Interacts with Baz2b. In terms of tissue distribution, ubiquitous.

It localises to the nucleus. The protein localises to the chromosome. The catalysed reaction is N(6)-methyl-L-lysyl(9)-[histone H3] + S-adenosyl-L-methionine = N(6),N(6)-dimethyl-L-lysyl(9)-[histone H3] + S-adenosyl-L-homocysteine + H(+). It carries out the reaction L-lysyl(9)-[histone H3] + S-adenosyl-L-methionine = N(6)-methyl-L-lysyl(9)-[histone H3] + S-adenosyl-L-homocysteine + H(+). Its activity is regulated as follows. Methyltransferase activity is inhibited by BIX-01294. Efficiently inhibited by compound E72, a BIX-01294 derivative in which the diazepane ring and the benzyl are replaced with a 3-dimethylaminopropyl and a 5-aminopentyl group at sites B and C, respectively. Histone methyltransferase that specifically mono- and dimethylates 'Lys-9' of histone H3 (H3K9me1 and H3K9me2, respectively) in euchromatin. H3K9me represents a specific tag for epigenetic transcriptional repression by recruiting HP1 proteins to methylated histones. Also weakly methylates 'Lys-27' of histone H3 (H3K27me). Also required for DNA methylation, the histone methyltransferase activity is not required for DNA methylation, suggesting that these 2 activities function independently. Probably targeted to histone H3 by different DNA-binding proteins like E2F6, MGA, MAX and/or DP1. During G0 phase, it probably contributes to silencing of MYC- and E2F-responsive genes, suggesting a role in G0/G1 transition in cell cycle. In addition to the histone methyltransferase activity, also methylates non-histone proteins: mediates dimethylation of 'Lys-373' of p53/TP53. Represses the expression of mitochondrial function-related genes, perhaps by occupying their promoter regions, working in concert with probable chromatin reader Baz2b. In Mus musculus (Mouse), this protein is Histone-lysine N-methyltransferase EHMT1 (Ehmt1).